A 375-amino-acid chain; its full sequence is MQIYKVGGAVRDRLLGRPVSDVDWLVVGATVEQMQAQGFRPVGADFPVFLHPKTGEEYALARTERKSGRGYGGFTFHASPDVTLEEDLIRRDLTINAMAEDEHGDLHDPYHGKTDLDQRILRHVSLAFAEDPLRVLRVARFAARYAPMGFRVADETLELMRQISASGELLALTAERSWKEIERALMEDQPQVFIEVLRACGALKELMPEVDALFHGEVSQGSHALDVLQQAAAQQQPLAVRWACLLLALGGKQIKTVNQRFKAPRECQELAILVGEFHEQGHRAMELAPEMLLDLLQKFDVYRRPQRFEEFIEACRMDALLGGRDYPQSEYLRGAAATARAVDVKPLMESGLTGQALGGALKAARLSALQAYKAR.

2 residues coordinate ATP: glycine 8 and arginine 11. Residues glycine 8 and arginine 11 each contribute to the CTP site. Positions 21 and 23 each coordinate Mg(2+). Arginine 91, arginine 137, and arginine 140 together coordinate ATP. 3 residues coordinate CTP: arginine 91, arginine 137, and arginine 140.

This sequence belongs to the tRNA nucleotidyltransferase/poly(A) polymerase family. Bacterial CCA-adding enzyme type 2 subfamily. Mg(2+) is required as a cofactor.

The enzyme catalyses a tRNA precursor + 2 CTP + ATP = a tRNA with a 3' CCA end + 3 diphosphate. It carries out the reaction a tRNA with a 3' CCA end + 2 CTP + ATP = a tRNA with a 3' CCACCA end + 3 diphosphate. Its function is as follows. Catalyzes the addition and repair of the essential 3'-terminal CCA sequence in tRNAs without using a nucleic acid template. Adds these three nucleotides in the order of C, C, and A to the tRNA nucleotide-73, using CTP and ATP as substrates and producing inorganic pyrophosphate. tRNA 3'-terminal CCA addition is required both for tRNA processing and repair. Also involved in tRNA surveillance by mediating tandem CCA addition to generate a CCACCA at the 3' terminus of unstable tRNAs. While stable tRNAs receive only 3'-terminal CCA, unstable tRNAs are marked with CCACCA and rapidly degraded. In Pseudomonas entomophila (strain L48), this protein is CCA-adding enzyme.